Reading from the N-terminus, the 1041-residue chain is Cullin-associated NEDD8-dissociated protein 1, C-terminal part (1041 aa).

2 disordered regions span residues 1 to 24 (MSSDAMSDYSHDDEHDPQTDELRE) and 64 to 103 (DMGEDEEMSGTQDDGSEDDVTEEPDLEDDDFEDFEEEGGY). Residues 9 to 24 (YSHDDEHDPQTDELRE) are compositionally biased toward basic and acidic residues. Positions 65 to 103 (MGEDEEMSGTQDDGSEDDVTEEPDLEDDDFEDFEEEGGY) are enriched in acidic residues. Residues 138 to 176 (SLYQQIAPAIVARFNKEREESVKLELVSTMDALVRKTAE) form an HEAT 1 repeat. The disordered stretch occupies residues 189-237 (SVGSGSKISRKRRRQDSDASMIDFEPSMGTSSAAGTPLAAPSSPQSGPQ). A compositionally biased stretch (low complexity) spans 225 to 237 (PLAAPSSPQSGPQ). 10 HEAT repeats span residues 242-279 (NALPVIVRSLVTMWKQASIHLKQAIIILLKSLALVRYG), 339-376 (PFLIALIPGVIVAVNDKNYKVSSEALAAVEQIVKALTP), 434-472 (LSFEKRSKGLVTLVDRLKNETTRLSAVRAIDDVAVLCSR), 479-516 (NWVREVTAELGAQLRKSDRVLRSASLETLRSLSMNPNT), 525-560 (MKNLEECLIPLISVEDVHLLAPSLIIIAKLVPGNAQ), 598-637 (GSGLTLMQNLLQDVGVNGDTSVVGRSIGTLLVHGGSNVGV), 670-708 (GASCSLTPNVFIPHFNSKSEKVRLASATALGNAAAGNVK), 710-744 (YLPTILGGLEKSDPQSYLLLHSVKELLQHPEMVRR), 780-817 (LDPPAYIPQFQEYLANGDAGIRSIVVSAFRFTLSDSRD), and 822-867 (VLRP…HLGE).

This sequence belongs to the CAND family. As to quaternary structure, interacts with candA-N. Interacts with unneddylated cullins culA and culD.

It localises to the nucleus. Assembly factor of SCF (SKP1-CUL1-F-box protein) E3 ubiquitin ligase complexes that promotes the exchange of the substrate-recognition F-box subunit in SCF complexes, thereby playing a key role in the cellular repertoire of SCF complexes. Acts as a F-box protein exchange factor when interacting with candA-N. This is Cullin-associated NEDD8-dissociated protein 1, C-terminal part (candA-C) from Emericella nidulans (strain FGSC A4 / ATCC 38163 / CBS 112.46 / NRRL 194 / M139) (Aspergillus nidulans).